We begin with the raw amino-acid sequence, 278 residues long: MGNTIRAFVAFIPADRCQNYVARDLREMPLDRMVDLSGSQLRRFPVHVCSFQELVKLYLSDNRLNSLPPELGQLQNLQILALDFNNFKALPQVVCTLKQLCILYLGNNKLCDLPRELSLLQNLRTLWVEANYLTKLPEVVCELSLLKTLHAGSNALRLLPGQLQRLRELRTIWLSGNLLTDFPPVLLHMPFLEIIDVDRNSIRYFPSLAHLSSLKLVIYDHNPCRNAPKVAKGVRRVGRWAEETPEPDPRKARRYALAREESQEAQLPALPPLPPTNS.

LRR repeat units lie at residues Leu-30–Phe-51, Gln-52–Leu-74, Asn-76–Leu-97, Lys-98–Gln-121, Leu-123–Leu-143, Ser-144–Leu-166, Arg-167–Met-189, and Phe-191–Ser-213. Positions Arg-239–Arg-250 are enriched in basic and acidic residues. A disordered region spans residues Arg-239 to Ser-278. The segment covering Ala-269–Ser-278 has biased composition (pro residues).

It is found in the nucleus. May play important roles in cardiac development and/or cardiac function. This Bos taurus (Bovine) protein is Leucine-rich repeat-containing protein 10 (LRRC10).